The sequence spans 660 residues: Leucine-rich repeat transmembrane protein FLRT2 (660 aa).

The first 35 residues, 1–35, serve as a signal peptide directing secretion; sequence MGLQTAKWPSHGTFVLKFWLIMSLGLYSHVSKLLA. 2 disulfide bridges follow: Cys-36-Cys-42 and Cys-40-Cys-49. The region spanning 36-67 is the LRRNT domain; sequence CPSVCRCDRNFVYCNERSLTSVPLGIPEGVTV. Over 36–540 the chain is Extracellular; that stretch reads CPSVCRCDRN…QTTSHTMGSP (505 aa). LRR repeat units follow at residues 62 to 87, 88 to 108, 109 to 131, 132 to 157, 159 to 181, 183 to 202, 203 to 228, 229 to 251, 252 to 274, and 275 to 298; these read PEGV…LHNV, QSVH…MNLP, KNVR…ALAQ, LLKL…AFRE, ISLK…LPVD, QELR…AFQN, LTSL…TFSH, LTKL…DLPG, THLI…AFAN, and LRKL…VFDH. An N-linked (GlcNAc...) asparagine glycan is attached at Asn-202. 2 cysteine pairs are disulfide-bonded: Cys-314/Cys-339 and Cys-316/Cys-360. An LRRCT domain is found at 338–361; sequence MCQGPEQVRGMAVRELNMNLLSCP. Residues 372-396 are compositionally biased toward low complexity; it reads PAPSTVSPTTQSPTVSVPSPSRGSV. Residues 372–413 form a disordered region; sequence PAPSTVSPTTQSPTVSVPSPSRGSVPPAPAPSKLPTIPDWDG. The Fibronectin type-III domain occupies 419–517; it reads PPISERIQLS…ICSEATTHAS (99 aa). A helical transmembrane segment spans residues 541–561; the sequence is FLLAGLIGGAVIFVLVVLLSV. Over 562-660 the chain is Cytoplasmic; it reads FCWHMHKKGR…SVPDLEHCHT (99 aa).

Self-associates (via leucine-rich repeats), giving rise to homooligomers. Interacts with FGFR1. Interacts with FGFR2. Interacts (via extracellular domain) with ADGRL1/LPHN1. Interacts (via extracellular domain) with ADGRL3 (via olfactomedin-like domain). Interacts (via extracellular domain) with UNC5D (via the first Ig-like domain). Can also interact (via extracellular domain) with UNC5B, but with much lower affinity. Interacts (via extracellular domain) with FN1. N-glycosylated. Post-translationally, proteolytic cleavage in the juxtamembrane region gives rise to a soluble ectodomain. Cleavage is probably effected by a metalloprotease. In terms of tissue distribution, detected in brain (at protein level).

The protein localises to the cell membrane. Its subcellular location is the endoplasmic reticulum membrane. It is found in the synapse. It localises to the synaptosome. The protein resides in the cell junction. The protein localises to the focal adhesion. Its subcellular location is the secreted. It is found in the extracellular space. It localises to the extracellular matrix. The protein resides in the microsome membrane. Functionally, functions in cell-cell adhesion, cell migration and axon guidance. Mediates cell-cell adhesion via its interactions with ADGRL3 and probably also other latrophilins that are expressed at the surface of adjacent cells. May play a role in the migration of cortical neurons during brain development via its interaction with UNC5D. Mediates axon growth cone collapse and plays a repulsive role in neuron guidance via its interaction with UNC5D, and possibly also other UNC-5 family members. Plays a role in fibroblast growth factor-mediated signaling cascades. Required for normal organization of the cardiac basement membrane during embryogenesis, and for normal embryonic epicardium and heart morphogenesis. This Rattus norvegicus (Rat) protein is Leucine-rich repeat transmembrane protein FLRT2.